The chain runs to 859 residues: Magnesium transporter ALR1 (859 aa).

The segment covering 1–20 has biased composition (low complexity); that stretch reads MSSSSSSSESSPNLSRSNSL. Disordered stretches follow at residues 1–281 and 330–399; these read MSSS…MPPQ and TSST…NIPS. An N-acetylserine modification is found at serine 2. Composition is skewed to basic and acidic residues over residues 28-42 and 55-73; these read KTED…RQHP and KNKE…EQKS. Tyrosine 77 carries the post-translational modification Phosphotyrosine. At serine 85 the chain carries Phosphoserine. Basic and acidic residues predominate over residues 144-154; it reads PPKDVGVKRDY. Over residues 157-176 the composition is skewed to low complexity; it reads SSSTASSGNKSKLSASSSAS. Phosphoserine occurs at positions 185 and 188. The segment covering 193 to 203 has biased composition (basic and acidic residues); that stretch reads IPHESKSDTHS. Over residues 213–235 the composition is skewed to polar residues; the sequence is YSTTSAHSSINPAVLLTKSTSQK. Phosphoserine is present on residues serine 220, serine 221, and serine 236. Residue threonine 242 is modified to Phosphothreonine. The segment covering 252 to 265 has biased composition (polar residues); that stretch reads TRASFDSDVSQASR. A compositionally biased stretch (low complexity) spans 330–339; that stretch reads TSSTSTSGSS. Basic and acidic residues predominate over residues 353–375; it reads EKSESTNETEIHEKKEDEHEKIK. Transmembrane regions (helical) follow at residues 744–764 and 773–793; these read TMIG…GMNV and IAWW…GWFL. Positions 830–859 are disordered; that stretch reads FNDRSKNINVRAGPSNKSVASLPSRYSRYD. Serine 850 bears the Phosphoserine mark.

Belongs to the CorA metal ion transporter (MIT) (TC 1.A.35) family.

It is found in the cell membrane. Functionally, plasma membrane magnesium transporter. The protein is Magnesium transporter ALR1 (ALR1) of Saccharomyces cerevisiae (strain ATCC 204508 / S288c) (Baker's yeast).